A 297-amino-acid polypeptide reads, in one-letter code: uncharacterized protein (297 aa).

A run of 4 helical transmembrane segments spans residues aspartate 3–leucine 23, valine 38–leucine 58, isoleucine 103–leucine 123, and tyrosine 128–methionine 148.

The protein localises to the cell membrane. This is an uncharacterized protein from Bacillus subtilis (strain 168).